The sequence spans 236 residues: Small ribosomal subunit protein uS2c (236 aa).

This sequence belongs to the universal ribosomal protein uS2 family.

Its subcellular location is the plastid. It localises to the chloroplast. The protein is Small ribosomal subunit protein uS2c (rps2) of Daucus carota (Wild carrot).